Consider the following 243-residue polypeptide: Large ribosomal subunit protein uL3 (243 aa).

Disordered regions lie at residues Val-139–Gly-164 and Lys-218–Ala-243. Gln-151 carries the post-translational modification N5-methylglutamine. The span at Lys-218 to Asp-229 shows a compositional bias: basic and acidic residues. The span at Lys-230–Ala-243 shows a compositional bias: low complexity.

It belongs to the universal ribosomal protein uL3 family. As to quaternary structure, part of the 50S ribosomal subunit. Forms a cluster with proteins L14 and L19. In terms of processing, methylated by PrmB.

Functionally, one of the primary rRNA binding proteins, it binds directly near the 3'-end of the 23S rRNA, where it nucleates assembly of the 50S subunit. This Afipia carboxidovorans (strain ATCC 49405 / DSM 1227 / KCTC 32145 / OM5) (Oligotropha carboxidovorans) protein is Large ribosomal subunit protein uL3.